A 382-amino-acid polypeptide reads, in one-letter code: Dual-specificity RNA methyltransferase RlmN (382 aa).

Glu-94 acts as the Proton acceptor in catalysis. A Radical SAM core domain is found at 100-336 (EANRGTLCVS…NTITRKTRGD (237 aa)). Residues Cys-107 and Cys-342 are joined by a disulfide bond. 3 residues coordinate [4Fe-4S] cluster: Cys-114, Cys-118, and Cys-121. Residues 168-169 (GE), Ser-200, 222-224 (SLH), and Asn-299 each bind S-adenosyl-L-methionine. The active-site S-methylcysteine intermediate is the Cys-342.

Belongs to the radical SAM superfamily. RlmN family. It depends on [4Fe-4S] cluster as a cofactor.

The protein resides in the cytoplasm. It catalyses the reaction adenosine(2503) in 23S rRNA + 2 reduced [2Fe-2S]-[ferredoxin] + 2 S-adenosyl-L-methionine = 2-methyladenosine(2503) in 23S rRNA + 5'-deoxyadenosine + L-methionine + 2 oxidized [2Fe-2S]-[ferredoxin] + S-adenosyl-L-homocysteine. It carries out the reaction adenosine(37) in tRNA + 2 reduced [2Fe-2S]-[ferredoxin] + 2 S-adenosyl-L-methionine = 2-methyladenosine(37) in tRNA + 5'-deoxyadenosine + L-methionine + 2 oxidized [2Fe-2S]-[ferredoxin] + S-adenosyl-L-homocysteine. Specifically methylates position 2 of adenine 2503 in 23S rRNA and position 2 of adenine 37 in tRNAs. m2A2503 modification seems to play a crucial role in the proofreading step occurring at the peptidyl transferase center and thus would serve to optimize ribosomal fidelity. The protein is Dual-specificity RNA methyltransferase RlmN of Legionella pneumophila (strain Lens).